The chain runs to 122 residues: uncharacterized protein (122 aa).

3 consecutive transmembrane segments (helical) span residues 21 to 40 (VWSWRRLFIFRVLNVVSIAI), 57 to 77 (YTHMAIPLSTCLFCLCLCICI), and 94 to 114 (LLFSVFHLVFSTIALSIYCIY).

The protein localises to the membrane. This is an uncharacterized protein from Saccharomyces cerevisiae (strain ATCC 204508 / S288c) (Baker's yeast).